Consider the following 467-residue polypeptide: Trigger factor (467 aa).

The PPIase FKBP-type domain occupies 174–261 (SDIAILTFKG…LQDLKTRELP (88 aa)). Residues 439 to 467 (PKKALNEKVKSSKPKNTQKKTDKTKKDSP) are disordered. Residues 457-467 (KKTDKTKKDSP) are compositionally biased toward basic and acidic residues.

The protein belongs to the FKBP-type PPIase family. Tig subfamily.

It is found in the cytoplasm. It carries out the reaction [protein]-peptidylproline (omega=180) = [protein]-peptidylproline (omega=0). Involved in protein export. Acts as a chaperone by maintaining the newly synthesized protein in an open conformation. Functions as a peptidyl-prolyl cis-trans isomerase. The protein is Trigger factor of Prochlorococcus marinus (strain SARG / CCMP1375 / SS120).